A 1586-amino-acid polypeptide reads, in one-letter code: COP1-interactive protein 1 (1586 aa).

The NAB domain maps to 10–84 (LKSFFEPHFD…RQYDDLTGEI (75 aa)). A disordered region spans residues 88–119 (VNGKGESSSSSSSDSDSDHSSKRKVKRNGNGK). Coiled-coil stretches lie at residues 128-411 (TGAL…LKES), 437-1196 (ASEL…LKEE), 1225-1336 (LETL…TEAT), and 1372-1406 (MESLRNELEMKGDEIETLMEKISNIEVKLRLSNQK). LRR repeat units lie at residues 173 to 187 (SEEISSKLKLETEKL), 188 to 210 (EDEKSIALSDNRELHQKLEVAGK), 216 to 239 (NQKLEDIKKERDELQTERDNGIKR), 261 to 285 (TSNLKQQLEASEQRVSELTSGMNSA), and 287 to 309 (EENKSLSLKVSEISDVIQQGQTT). A compositionally biased stretch (basic and acidic residues) spans 249–262 (DWKTTSDQLKDETS). A disordered region spans residues 249-286 (DWKTTSDQLKDETSNLKQQLEASEQRVSELTSGMNSAE). The tract at residues 325 to 353 (KEKESEHSSLVELHKTHERESSSQVKELE) is disordered. LRR repeat units follow at residues 384-410 (IAELSNEIQEAQNTMQELMSESGQLKE), 437-461 (ASELEAQLESSKQQVSDLSASLKAA), 473-498 (VETMNKLEQTQNTIQELMAELGKLKD), 560-586 (IAELSNEIKEAQNTIQELVSESGQLKE), 613-637 (VSELEAQLESSEQRISDLTVDLKDA), 649-674 (LEIMDKLEQAQNTIKELMDELGELKD), 768-792 (LSELETQLKLLEQRVVDLSASLNAA), 824-850 (LAESKDTLTQKENELSSFVEVHEAHKR), 856-880 (VKELEARVESAEEQVKELNQNLNSS), 902-929 (ESTIQELSSESERLKGSHAEKDNELFSL), 944-968 (LRGLEAQLESSEHRVLELSESLKAA), 990-1014 (QIMVQELTADSSKLKEQLAEKESKL), 1077-1101 (ISELEKTMEERGTELSALTQKLEDN), 1120-1144 (RAELDSMSVQKEEVEKQMVCKSEEA), 1195-1220 (EEIINKVKVHESILEEINGLSEKIKG), 1247-1272 (VQMHDKINVASSEIMALTELINNLKN), 1372-1396 (MESLRNELEMKGDEIETLMEKISNI), 1398-1417 (VKLRLSNQKLRVTEQVLTEK), 1426-1448 (AKHLEEQALLEKNLTMTHETYRG), and 1450-1474 (IKEIADKVNITVDGFQSMSEKLTEK). Positions 430–456 (QRDSSTRASELEAQLESSKQQVSDLSA) are disordered. The span at 444-455 (LESSKQQVSDLS) shows a compositional bias: polar residues. The segment at 965–985 (LKAAEEESRTMSTKISETSDE) is disordered. The stretch at 1496–1530 (VIERNHEKEKMNKEIEKKDEEIKKLGGKVREDEKE) forms a coiled coil.

In terms of assembly, interacts with COP1 coiled-coil region. In terms of tissue distribution, mainly expressed in photosynthetic and vascular tissues. Accumulates in both dark-grown and light-grown seedlings roots and shoots, leaves and flowers (at protein level).

Its subcellular location is the cell membrane. The protein resides in the cytoplasm. It localises to the cytoskeleton. Its function is as follows. Positive regulator of abscisic acid (ABA)-mediated signaling pathways involved in abiotic stress responses (e.g. osmotic stress) and leading to various plant adaptation (e.g. stomata closure). The polypeptide is COP1-interactive protein 1 (Arabidopsis thaliana (Mouse-ear cress)).